Here is a 705-residue protein sequence, read N- to C-terminus: Solute carrier family 28 member 3 (705 aa).

A compositionally biased stretch (basic and acidic residues) spans 1–21; that stretch reads MSRSDPDPGKNSEPSKSKMSL. A disordered region spans residues 1–96; it reads MSRSDPDPGK…TEEESEDERQ (96 aa). Over 1-119 the chain is Cytoplasmic; that stretch reads MSRSDPDPGK…FCRKHRVILQ (119 aa). Residues 48 to 63 are compositionally biased toward polar residues; that stretch reads APGNSTVRSRVVQSGE. Over residues 65–74 the composition is skewed to basic and acidic residues; the sequence is GRAKQDDRQI. Residues 120 to 140 form a helical membrane-spanning segment; the sequence is HTIWAVLLTGFLALVIAACAL. The Extracellular portion of the chain corresponds to 141–145; sequence NFHRA. A helical transmembrane segment spans residues 146–166; that stretch reads LPLFVITLVTIFFVVWDRLMA. The Cytoplasmic portion of the chain corresponds to 167 to 190; sequence KYEQRIDDVLSPGKRLLERHWFWL. Residues 191–211 form a helical membrane-spanning segment; sequence KWVVWCSLILAVILWLALDTA. Over 212 to 214 the chain is Extracellular; sequence RLG. Residues 215–236 traverse the membrane as a helical segment; the sequence is QQQLISFGGLVMYIVLLFLFSK. The Cytoplasmic portion of the chain corresponds to 237 to 244; the sequence is HPTRVYWR. A helical membrane pass occupies residues 245–264; the sequence is PVFWGIGLQFLLGLLILRTR. The Extracellular segment spans residues 265–301; it reads PGFVAFDWMGKQVQTFLGYTDAGAQFVFGEKYTDHFF. Residues 302–322 form a helical membrane-spanning segment; it reads AFKILPIVVFFSTVMSMLYYL. Residues 323–346 lie on the Cytoplasmic side of the membrane; that stretch reads GLMQWIIRKVGWLMLVTMGSSPIE. Positions 347 to 365 form an intramembrane region, helical; that stretch reads SVVAAGNIFVGQTESPLLV. At 366-378 the chain is on the cytoplasmic side; that stretch reads QPYLPHVTKSELH. Residues 379–401 form a helical membrane-spanning segment; the sequence is TIMTAGFATIAGSVLGAYISFGV. Topologically, residues 402-403 are extracellular; that stretch reads SS. A helical transmembrane segment spans residues 404–425; that stretch reads THLLTASVMSAPAALAVAKLFW. The Cytoplasmic portion of the chain corresponds to 426–460; the sequence is PETEKPKITLKNAMKMENGDSRNLLEAATQGASSS. A helical membrane pass occupies residues 461 to 486; sequence IPLVANIAANLIAFLALLSFVNSALS. Over 487 to 524 the chain is Extracellular; that stretch reads WFGSMFDYPQLSFELICSYIFMPFSFMMGVDWQDRFMV. Positions 525–544 form an intramembrane region, helical; that stretch reads AKLIGYKTFFNEFVAYEHLS. The Extracellular segment spans residues 545–583; sequence KFINLRKAAGPKFVNGVQQYMSIRSETIATYALCGFANF. A helical transmembrane segment spans residues 584–594; sequence GSLGIVIGGLT. Over 595–607 the chain is Cytoplasmic; it reads SIAPSRKRDIASG. Residues 608–630 traverse the membrane as a helical segment; that stretch reads AMRALIAGTIACFMTACIAGMLS. At 631–705 the chain is on the extracellular side; sequence DTPVAINCHH…LNCGWIPNIP (75 aa).

The protein belongs to the concentrative nucleoside transporter (CNT) (TC 2.A.41) family. In terms of assembly, homotrimer. Expressed in kidney; in the proximal tubule, glomerulus and cortical collecting duct.

The protein localises to the cell membrane. The catalysed reaction is thymidine(out) + 2 Na(+)(out) = thymidine(in) + 2 Na(+)(in). The enzyme catalyses cytidine(out) + 2 Na(+)(out) = cytidine(in) + 2 Na(+)(in). It carries out the reaction uridine(out) + 2 Na(+)(out) = uridine(in) + 2 Na(+)(in). It catalyses the reaction adenosine(out) + 2 Na(+)(out) = adenosine(in) + 2 Na(+)(in). The catalysed reaction is guanosine(out) + 2 Na(+)(out) = guanosine(in) + 2 Na(+)(in). The enzyme catalyses inosine(out) + 2 Na(+)(out) = inosine(in) + 2 Na(+)(in). Sodium-dependent, pyrimidine- and purine-selective. Involved in the homeostasis of endogenous nucleosides. Exhibits the transport characteristics of the nucleoside transport system cib or N3 subtype (N3/cib) (with marked transport of both thymidine and inosine). Employs a 2:1 sodium/nucleoside ratio. Also able to transport gemcitabine, 3'-azido-3'-deoxythymidine (AZT), ribavirin and 3-deazauridine. In Rattus norvegicus (Rat), this protein is Solute carrier family 28 member 3 (Slc28a3).